We begin with the raw amino-acid sequence, 312 residues long: Porphobilinogen deaminase (312 aa).

S-(dipyrrolylmethanemethyl)cysteine is present on C243.

Belongs to the HMBS family. Monomer. It depends on dipyrromethane as a cofactor.

It carries out the reaction 4 porphobilinogen + H2O = hydroxymethylbilane + 4 NH4(+). The protein operates within porphyrin-containing compound metabolism; protoporphyrin-IX biosynthesis; coproporphyrinogen-III from 5-aminolevulinate: step 2/4. In terms of biological role, tetrapolymerization of the monopyrrole PBG into the hydroxymethylbilane pre-uroporphyrinogen in several discrete steps. The protein is Porphobilinogen deaminase of Vibrio vulnificus (strain CMCP6).